Here is a 662-residue protein sequence, read N- to C-terminus: Neurexin-2-beta (662 aa).

A compositionally biased stretch (gly residues) spans 1–10 (MPPGGSGQGG). A disordered region spans residues 1-27 (MPPGGSGQGGCPRRPPALAGPLPPPPP). Residues 1–46 (MPPGGSGQGGCPRRPPALAGPLPPPPPPPPLPLLLGLLLLLGAAEG) form the signal peptide. Topologically, residues 47–586 (ARVSSSLSTT…EVIRESSSTT (540 aa)) are extracellular. Residues 87 to 295 (TTYIFGKGGA…HLRLVGEGPS (209 aa)) form the Laminin G-like domain. 2 residues coordinate Ca(2+): D139 and V156. The N-linked (GlcNAc...) asparagine glycan is linked to N186. Ca(2+)-binding residues include I238 and N240. A glycan (O-linked (Xyl...) (heparan sulfate) serine) is linked at S350. Disordered stretches follow at residues 408 to 458 (ATQD…LPPT), 476 to 496 (LLSP…ATGA), and 530 to 557 (LGPG…PGFP). A helical membrane pass occupies residues 587 to 607 (GMVVGIVAAAALCILILLYAM). The Cytoplasmic portion of the chain corresponds to 608–662 (YKYRNRDEGSYQVDQSRNYISNSAQSNGAVVKEKAPAAPKTPSKAKKNKDKEYYV). Positions 629-662 (NSAQSNGAVVKEKAPAAPKTPSKAKKNKDKEYYV) are disordered.

The protein belongs to the neurexin family. In terms of assembly, interacts (via cytoplasmic C-terminal region) with CASK. Isoform Beta 4b binds alpha-dystroglycan and neuroligins NLGN1, NLGN2 and NLGN3. Interacts with CBLN1, CBLN2 and, less avidly, with CBLN4. Interacts with CLSTN3. O-glycosylated; contains heparan sulfate. Heparan sulfate attachment is required for synapse development by mediating interactions with neuroligins. In terms of tissue distribution, brain (neuronal synapse).

It localises to the presynaptic cell membrane. Neuronal cell surface protein that may be involved in cell recognition and cell adhesion. The chain is Neurexin-2-beta (Nrxn2) from Rattus norvegicus (Rat).